Reading from the N-terminus, the 501-residue chain is MLPPKIFFEKVKEIIWPIERKELKLFIPMALMMLCILFNFGALRSIKDSLVVPSMGAEIISLFKLWLVLPSCVIFTVLYVKLSNKLNFEYIFYIIVGSFLLFFLLFAYIIYPNQDIYHPNDEMINNLIASYPNFKWFIKIGSKWSYALMYIFSELWSAVVINLMFWQFANHIFDTSKAKRFYPVLGMVGNIGLIIAGSVLVFFSSGQEVIDSELLPDSFNSPAGNAIMLQPIMSIIVAAGIIAMLLFRIINRFILTDSINVLDTKKVTVKTKTKLSVIESIKLVIHSKYIGRIALLIICYGLLINIVEGPWKAKIKELHPNTIDYFNFMGRFNIWMGISCVTFMVIGSNILRRLGWLISALLTPIMLSITGLMFFIFIIFIEEIGACFGDFNLLYAAIIVGAIQNILSKSSKYSLFDSTKEMAYIPLSLELRTKGKAAVEVIGTKFGKSLGAFIQSLIFIIIPTATFDSIIIYLLVIFIVMMSLWIWNVIKLNKEYIELCK.

The next 12 membrane-spanning stretches (helical) occupy residues 23–43, 59–79, 90–110, 146–166, 183–203, 227–247, 293–313, 326–346, 361–381, 383–403, 446–466, and 470–490; these read LKLF…FGAL, IISL…TVLY, YIFY…AYII, YALM…LMFW, PVLG…LVFF, IMLQ…MLLF, IALL…PWKA, FNFM…FMVI, LLTP…IIFI, EIGA…VGAI, FGKS…PTAT, and IIIY…WNVI.

It belongs to the ADP/ATP translocase tlc family.

It is found in the cell membrane. Provides the rickettsial cell with host ATP in exchange for rickettsial ADP. This is an obligate exchange system. This energy acquiring activity is an important component of rickettsial parasitism. The chain is ADP,ATP carrier protein 3 (tlcC) from Rickettsia felis (strain ATCC VR-1525 / URRWXCal2) (Rickettsia azadi).